A 490-amino-acid chain; its full sequence is Betaine aldehyde dehydrogenase (490 aa).

2 residues coordinate K(+): I27 and D93. 150-152 provides a ligand contact to NAD(+); sequence GAW. The active-site Charge relay system is the K162. Residue 176-179 participates in NAD(+) binding; it reads KPSE. V180 provides a ligand contact to K(+). 230-233 provides a ligand contact to NAD(+); sequence GTDT. Residue L246 coordinates K(+). The Proton acceptor role is filled by E252. NAD(+)-binding residues include G254, C286, and E387. The active-site Nucleophile is C286. C286 bears the Cysteine sulfenic acid (-SOH) mark. The K(+) site is built by K457 and G460. E464 (charge relay system) is an active-site residue.

This sequence belongs to the aldehyde dehydrogenase family. As to quaternary structure, dimer of dimers. Requires K(+) as cofactor.

It catalyses the reaction betaine aldehyde + NAD(+) + H2O = glycine betaine + NADH + 2 H(+). The protein operates within amine and polyamine biosynthesis; betaine biosynthesis via choline pathway; betaine from betaine aldehyde: step 1/1. In terms of biological role, involved in the biosynthesis of the osmoprotectant glycine betaine. Catalyzes the irreversible oxidation of betaine aldehyde to the corresponding acid. The protein is Betaine aldehyde dehydrogenase of Pseudomonas syringae pv. syringae (strain B728a).